A 546-amino-acid chain; its full sequence is Chaperonin GroEL (546 aa).

ATP is bound by residues 30 to 33, Lys-51, 87 to 91, Gly-415, 479 to 481, and Asp-495; these read TLGP, DGTTT, and NAA. Residues 526-546 are disordered; sequence KEDAPMPGGMPGGMGGMGMDM. Over residues 534 to 546 the composition is skewed to gly residues; it reads GMPGGMGGMGMDM.

This sequence belongs to the chaperonin (HSP60) family. In terms of assembly, forms a cylinder of 14 subunits composed of two heptameric rings stacked back-to-back. Interacts with the co-chaperonin GroES.

The protein resides in the cytoplasm. It catalyses the reaction ATP + H2O + a folded polypeptide = ADP + phosphate + an unfolded polypeptide.. Together with its co-chaperonin GroES, plays an essential role in assisting protein folding. The GroEL-GroES system forms a nano-cage that allows encapsulation of the non-native substrate proteins and provides a physical environment optimized to promote and accelerate protein folding. This is Chaperonin GroEL from Burkholderia thailandensis.